The chain runs to 484 residues: HSPB1-associated protein 1 (484 aa).

Positions 1–26 (MAARPGAITNADSASGGGEEEGKHVK) are disordered. The interval 88 to 208 (ETACNYVEAT…EDTPFLYPTR (121 aa)) is interaction with HSPB1. Residues 124-288 (WAYADYKYFV…HQTRVEEAIT (165 aa)) enclose the JmjC domain. Positions 396–429 (TPSSEEPSSERGGIFENDGEDFVSKNGKSFGKRQ) are disordered.

In terms of assembly, interacts with CRYAB and HSPB1.

It is found in the cytoplasm. May play a role in cellular stress response. The chain is HSPB1-associated protein 1 (HSPBAP1) from Bos taurus (Bovine).